A 321-amino-acid chain; its full sequence is Serpentine receptor class delta-63 (321 aa).

Helical transmembrane passes span 14–34 (LVYMICLMLYITMYILIYNFT), 41–61 (VKYFLYPSCTAMLIAMTMAFA), 83–103 (YIGPTFCFYCYNLYTAFGIVV), 128–148 (LWTLVFMWHYLCPLIYLIVII), 190–208 (AAMSLSLISMYYPLIGTYW), 240–260 (NFQILLPMLRYIPLTAIYFMI), and 273–293 (TITVLGTIPCILDPLVQIYFI).

The protein belongs to the nematode receptor-like protein srd family.

It localises to the membrane. The chain is Serpentine receptor class delta-63 (srd-63) from Caenorhabditis elegans.